Here is a 479-residue protein sequence, read N- to C-terminus: UDP-N-acetylmuramate--L-alanine ligase (479 aa).

124–130 serves as a coordination point for ATP; it reads GSHGKTT.

Belongs to the MurCDEF family.

Its subcellular location is the cytoplasm. It carries out the reaction UDP-N-acetyl-alpha-D-muramate + L-alanine + ATP = UDP-N-acetyl-alpha-D-muramoyl-L-alanine + ADP + phosphate + H(+). Its pathway is cell wall biogenesis; peptidoglycan biosynthesis. Functionally, cell wall formation. In Synechococcus sp. (strain RCC307), this protein is UDP-N-acetylmuramate--L-alanine ligase.